We begin with the raw amino-acid sequence, 125 residues long: Cu-Zn superoxide dismutase-like protein OPG175 (125 aa).

A disulfide bridge links C52 with C102.

Belongs to the Cu-Zn superoxide dismutase family.

Its subcellular location is the virion. It is found in the host cytoplasm. In terms of biological role, superoxide dismutase-like protein with no enzymatic activity. This Vaccinia virus (strain Western Reserve) (VACV) protein is Cu-Zn superoxide dismutase-like protein OPG175 (OPG175).